A 591-amino-acid chain; its full sequence is V-type ATP synthase alpha chain (591 aa).

Residue 242–249 participates in ATP binding; the sequence is GPFGAGKT.

This sequence belongs to the ATPase alpha/beta chains family.

The catalysed reaction is ATP + H2O + 4 H(+)(in) = ADP + phosphate + 5 H(+)(out). Its function is as follows. Produces ATP from ADP in the presence of a proton gradient across the membrane. The V-type alpha chain is a catalytic subunit. The chain is V-type ATP synthase alpha chain (atpA) from Chlamydia muridarum (strain MoPn / Nigg).